A 322-amino-acid polypeptide reads, in one-letter code: Crystallin J1A (322 aa).

The protein belongs to the ADP-ribosylglycohydrolase family. J1 crystallin subfamily. Expressed in the rhopalia. Present in both the large and small eyes.

The chain is Crystallin J1A from Tripedalia cystophora (Jellyfish).